Here is a 110-residue protein sequence, read N- to C-terminus: Thioredoxin (110 aa).

One can recognise a Thioredoxin domain in the interval 2 to 110; it reads SALLVEIDKD…IDAMIAKHVG (109 aa). A disulfide bridge links Cys33 with Cys36.

The protein belongs to the thioredoxin family.

In terms of biological role, participates in various redox reactions through the reversible oxidation of its active center dithiol to a disulfide and catalyzes dithiol-disulfide exchange reactions. This Peptoclostridium acidaminophilum (Eubacterium acidaminophilum) protein is Thioredoxin (trxA).